Consider the following 648-residue polypeptide: Phosphatidylinositol-3,5-bisphosphate 3-phosphatase MTMR14 (648 aa).

Positions 1–19 (MAGARAAAAASAGSTASSG) are enriched in low complexity. The segment at 1-27 (MAGARAAAAASAGSTASSGSPPPQEPG) is disordered. N6-acetyllysine is present on lysine 193. N-linked (GlcNAc...) asparagine glycosylation is found at asparagine 225 and asparagine 240. Cysteine 329 acts as the Phosphocysteine intermediate in catalysis. Residues glycine 332, tryptophan 333, aspartate 334, arginine 335, and arginine 381 each contribute to the a 1,2-diacyl-sn-glycero-3-phospho-(1D-myo-inositol-3,5-bisphosphate) site. Residues glycine 332, tryptophan 333, aspartate 334, arginine 335, and arginine 381 each coordinate a 1,2-diacyl-sn-glycero-3-phospho-(1D-myo-inositol-3-phosphate). A disordered region spans residues 471-544 (PTQAAWRKSH…PRSVDHPLPG (74 aa)). Basic and acidic residues predominate over residues 494-506 (PSEERLPSHHGLT). Serine 516 carries the phosphoserine modification. N-linked (GlcNAc...) asparagine glycosylation occurs at asparagine 517. Serine 528, serine 578, and serine 622 each carry phosphoserine. Arginine 636 is subject to Omega-N-methylarginine.

It belongs to the protein-tyrosine phosphatase family. Non-receptor class myotubularin subfamily.

It is found in the cytoplasm. It catalyses the reaction a 1,2-diacyl-sn-glycero-3-phospho-(1D-myo-inositol-3,5-bisphosphate) + H2O = a 1,2-diacyl-sn-glycero-3-phospho-(1D-myo-inositol-5-phosphate) + phosphate. It carries out the reaction a 1,2-diacyl-sn-glycero-3-phospho-(1D-myo-inositol-3-phosphate) + H2O = a 1,2-diacyl-sn-glycero-3-phospho-(1D-myo-inositol) + phosphate. Functionally, lipid phosphatase that specifically dephosphorylates the D-3 position of phosphatidylinositol 3-phosphate and phosphatidylinositol 3,5-bisphosphate, generating phosphatidylinositol and phosphatidylinositol 5-phosphate. The chain is Phosphatidylinositol-3,5-bisphosphate 3-phosphatase MTMR14 from Mus musculus (Mouse).